The primary structure comprises 334 residues: Protein CapI (334 aa).

S126 provides a ligand contact to substrate. Y151 (proton acceptor) is an active-site residue.

This sequence belongs to the NAD(P)-dependent epimerase/dehydratase family.

It participates in capsule biogenesis; capsule polysaccharide biosynthesis. Functionally, required for the biosynthesis of type 1 capsular polysaccharide. The sequence is that of Protein CapI (capI) from Staphylococcus aureus.